Reading from the N-terminus, the 675-residue chain is DNA ligase 1 (675 aa).

Residues 34-38, 83-84, and Glu-114 each bind NAD(+); these read DFEYD and SL. Lys-116 serves as the catalytic N6-AMP-lysine intermediate. Residues Arg-137, Glu-177, Lys-295, and Lys-319 each coordinate NAD(+). Residues Cys-413, Cys-416, Cys-431, and Cys-436 each coordinate Zn(2+). The BRCT domain occupies 596–675; the sequence is NSGSALAGKT…AEFLRLLSGG (80 aa).

Belongs to the NAD-dependent DNA ligase family. LigA subfamily. The cofactor is Mg(2+). It depends on Mn(2+) as a cofactor.

The enzyme catalyses NAD(+) + (deoxyribonucleotide)n-3'-hydroxyl + 5'-phospho-(deoxyribonucleotide)m = (deoxyribonucleotide)n+m + AMP + beta-nicotinamide D-nucleotide.. In terms of biological role, DNA ligase that catalyzes the formation of phosphodiester linkages between 5'-phosphoryl and 3'-hydroxyl groups in double-stranded DNA using NAD as a coenzyme and as the energy source for the reaction. It is essential for DNA replication and repair of damaged DNA. The chain is DNA ligase 1 from Opitutus terrae (strain DSM 11246 / JCM 15787 / PB90-1).